The following is a 101-amino-acid chain: Gamma-secretase subunit PEN-2 (101 aa).

Topologically, residues 1-17 (MNLERVSNEEKLNLCRK) are cytoplasmic. Positions 18–36 (YYLGGFAFLPFLWLVNIFW) form an intramembrane region, helical. Residues 37 to 57 (FFREAFLVPAYTEQSQIKGYV) are Cytoplasmic-facing. A helical transmembrane segment spans residues 58 to 78 (WRSAVGFLFWVIVLTSWITIF). Residues 79 to 101 (QIYRPRWGALGDYLSFTIPLGTP) are Lumenal-facing.

The protein belongs to the PEN-2 family. The functional gamma-secretase complex is composed of at least four polypeptides: a presenilin homodimer (PSEN1 or PSEN2), nicastrin (NCSTN), APH1 (APH1A or APH1B) and PSENEN. Widely expressed. Expressed in leukocytes, lung, placenta, small intestine, liver, kidney, spleen thymus, skeletal muscle, heart and brain.

Its subcellular location is the endoplasmic reticulum membrane. The protein resides in the golgi apparatus. The protein localises to the golgi stack membrane. It localises to the cell membrane. It is found in the membrane. Its function is as follows. Essential subunit of the gamma-secretase complex, an endoprotease complex that catalyzes the intramembrane cleavage of integral membrane proteins such as Notch receptors and APP (amyloid-beta precursor protein). The gamma-secretase complex plays a role in Notch and Wnt signaling cascades and regulation of downstream processes via its role in processing key regulatory proteins, and by regulating cytosolic CTNNB1 levels. PSENEN modulates both endoproteolysis of presenilin and gamma-secretase activity. This is Gamma-secretase subunit PEN-2 (PSENEN) from Homo sapiens (Human).